Reading from the N-terminus, the 77-residue chain is NAD(P)H-quinone oxidoreductase subunit L (77 aa).

The next 2 helical transmembrane spans lie at 12–32 (LIAY…LLFY) and 47–67 (LGIY…SPFL).

Belongs to the complex I NdhL subunit family. NDH-1 can be composed of about 15 different subunits; different subcomplexes with different compositions have been identified which probably have different functions.

The protein resides in the cellular thylakoid membrane. The enzyme catalyses a plastoquinone + NADH + (n+1) H(+)(in) = a plastoquinol + NAD(+) + n H(+)(out). It carries out the reaction a plastoquinone + NADPH + (n+1) H(+)(in) = a plastoquinol + NADP(+) + n H(+)(out). Functionally, NDH-1 shuttles electrons from an unknown electron donor, via FMN and iron-sulfur (Fe-S) centers, to quinones in the respiratory and/or the photosynthetic chain. The immediate electron acceptor for the enzyme in this species is believed to be plastoquinone. Couples the redox reaction to proton translocation, and thus conserves the redox energy in a proton gradient. Cyanobacterial NDH-1 also plays a role in inorganic carbon-concentration. This Prochlorococcus marinus (strain AS9601) protein is NAD(P)H-quinone oxidoreductase subunit L.